The chain runs to 265 residues: uncharacterized protein (265 aa).

At Ser-223 the chain carries Phosphoserine.

This is an uncharacterized protein from Saccharomyces cerevisiae (strain ATCC 204508 / S288c) (Baker's yeast).